The following is a 126-amino-acid chain: Histone H2B type 1-M (126 aa).

The segment at 1 to 36 is disordered; that stretch reads MPEPVKSAPVPKKGSKKAINKAQKKDGKKRKRSRKE. At P2 the chain carries N-acetylproline. E3 is modified (ADP-ribosyl glutamic acid). An N6-(2-hydroxyisobutyryl)lysine; alternate modification is found at K6. K6 carries the N6-(beta-hydroxybutyryl)lysine; alternate modification. K6 carries the N6-acetyllysine; alternate modification. Residue K6 is modified to N6-butyryllysine; alternate. K6 carries the post-translational modification N6-crotonyllysine; alternate. The residue at position 6 (K6) is an N6-lactoyllysine; alternate. A Glycyl lysine isopeptide (Lys-Gly) (interchain with G-Cter in SUMO2); alternate cross-link involves residue K6. S7 bears the ADP-ribosylserine mark. K12 is subject to N6-(beta-hydroxybutyryl)lysine; alternate. 2 positions are modified to N6-acetyllysine; alternate: K12 and K13. K12 and K13 each carry N6-crotonyllysine; alternate. An N6-lactoyllysine; alternate modification is found at K12. The residue at position 13 (K13) is an N6-(2-hydroxyisobutyryl)lysine; alternate. S15 carries the phosphoserine; by STK4/MST1 modification. N6-acetyllysine; alternate occurs at positions 16, 17, 21, and 24. An N6-crotonyllysine; alternate mark is found at K16, K17, K21, and K24. N6-lactoyllysine; alternate occurs at positions 16, 17, 21, and 24. 2 positions are modified to N6-(beta-hydroxybutyryl)lysine; alternate: K17 and K21. K17 is subject to N6-glutaryllysine; alternate. N6-(2-hydroxyisobutyryl)lysine; alternate is present on residues K21 and K24. Residue K21 is modified to N6-butyryllysine; alternate. A Glycyl lysine isopeptide (Lys-Gly) (interchain with G-Cter in SUMO2); alternate cross-link involves residue K21. Residue K25 is modified to N6-(2-hydroxyisobutyryl)lysine. K35 carries the post-translational modification N6-(2-hydroxyisobutyryl)lysine; alternate. The residue at position 35 (K35) is an N6-(beta-hydroxybutyryl)lysine; alternate. Residue K35 is modified to N6-crotonyllysine; alternate. At K35 the chain carries N6-glutaryllysine; alternate. Position 35 is an N6-succinyllysine; alternate (K35). Residue K35 forms a Glycyl lysine isopeptide (Lys-Gly) (interchain with G-Cter in ubiquitin); alternate linkage. The residue at position 36 (E36) is a PolyADP-ribosyl glutamic acid. S37 is modified (phosphoserine; by AMPK). 3 positions are modified to N6-(2-hydroxyisobutyryl)lysine; alternate: K44, K47, and K58. K44 is modified (N6-lactoyllysine; alternate). An N6-glutaryllysine; alternate mark is found at K44 and K47. K47 carries the N6-methyllysine; alternate modification. K58 is modified (N6,N6-dimethyllysine; alternate). The residue at position 80 (R80) is a Dimethylated arginine. Position 86 is an N6-(2-hydroxyisobutyryl)lysine; alternate (K86). K86 bears the N6-(beta-hydroxybutyryl)lysine; alternate mark. K86 carries the N6-acetyllysine; alternate modification. The residue at position 86 (K86) is an N6-lactoyllysine; alternate. An N6,N6,N6-trimethyllysine; alternate modification is found at K86. 2 positions are modified to omega-N-methylarginine: R87 and R93. K109 bears the N6-(2-hydroxyisobutyryl)lysine; alternate mark. N6-lactoyllysine; alternate is present on K109. N6-glutaryllysine; alternate is present on K109. K109 is subject to N6-methyllysine; alternate. S113 carries an O-linked (GlcNAc) serine glycan. Position 116 is a phosphothreonine (T116). K117 and K121 each carry N6-(2-hydroxyisobutyryl)lysine; alternate. N6-(beta-hydroxybutyryl)lysine; alternate is present on residues K117 and K121. N6-lactoyllysine; alternate is present on residues K117 and K121. An N6-glutaryllysine; alternate mark is found at K117 and K121. Residues K117 and K121 each carry the N6-succinyllysine; alternate modification. Position 117 is an N6-malonyllysine; alternate (K117). At K117 the chain carries N6-methylated lysine; alternate. K121 participates in a covalent cross-link: Glycyl lysine isopeptide (Lys-Gly) (interchain with G-Cter in ubiquitin); alternate.

The protein belongs to the histone H2B family. The nucleosome is a histone octamer containing two molecules each of H2A, H2B, H3 and H4 assembled in one H3-H4 heterotetramer and two H2A-H2B heterodimers. The octamer wraps approximately 147 bp of DNA. Post-translationally, monoubiquitination at Lys-35 (H2BK34Ub) by the MSL1/MSL2 dimer is required for histone H3 'Lys-4' (H3K4me) and 'Lys-79' (H3K79me) methylation and transcription activation at specific gene loci, such as HOXA9 and MEIS1 loci. Similarly, monoubiquitination at Lys-121 (H2BK120Ub) by the RNF20/40 complex gives a specific tag for epigenetic transcriptional activation and is also prerequisite for histone H3 'Lys-4' and 'Lys-79' methylation. It also functions cooperatively with the FACT dimer to stimulate elongation by RNA polymerase II. H2BK120Ub also acts as a regulator of mRNA splicing: deubiquitination by USP49 is required for efficient cotranscriptional splicing of a large set of exons. Phosphorylation at Ser-37 (H2BS36ph) by AMPK in response to stress promotes transcription. Phosphorylated on Ser-15 (H2BS14ph) by STK4/MST1 during apoptosis; which facilitates apoptotic chromatin condensation. Also phosphorylated on Ser-15 in response to DNA double strand breaks (DSBs), and in correlation with somatic hypermutation and immunoglobulin class-switch recombination. In terms of processing, glcNAcylation at Ser-113 promotes monoubiquitination of Lys-121. It fluctuates in response to extracellular glucose, and associates with transcribed genes. Post-translationally, ADP-ribosylated by PARP1 or PARP2 on Ser-7 (H2BS6ADPr) in response to DNA damage. H2BS6ADPr promotes recruitment of CHD1L. Mono-ADP-ribosylated on Glu-3 (H2BE2ADPr) by PARP3 in response to single-strand breaks. Poly ADP-ribosylation on Glu-36 (H2BE35ADPr) by PARP1 regulates adipogenesis: it inhibits phosphorylation at Ser-37 (H2BS36ph), thereby blocking expression of pro-adipogenetic genes. Crotonylation (Kcr) is specifically present in male germ cells and marks testis-specific genes in post-meiotic cells, including X-linked genes that escape sex chromosome inactivation in haploid cells. Crotonylation marks active promoters and enhancers and confers resistance to transcriptional repressors. It is also associated with post-meiotically activated genes on autosomes. In terms of processing, lactylated in macrophages by EP300/P300 by using lactoyl-CoA directly derived from endogenous or exogenous lactate, leading to stimulates gene transcription.

It localises to the nucleus. The protein localises to the chromosome. In terms of biological role, core component of nucleosome. Nucleosomes wrap and compact DNA into chromatin, limiting DNA accessibility to the cellular machineries which require DNA as a template. Histones thereby play a central role in transcription regulation, DNA repair, DNA replication and chromosomal stability. DNA accessibility is regulated via a complex set of post-translational modifications of histones, also called histone code, and nucleosome remodeling. The protein is Histone H2B type 1-M of Homo sapiens (Human).